We begin with the raw amino-acid sequence, 237 residues long: Ribose-5-phosphate isomerase A (237 aa).

Substrate contacts are provided by residues 33-36 (TGST), 90-93 (DGAD), and 103-106 (KGGG). The active-site Proton acceptor is Glu-112. Lys-130 is a binding site for substrate.

The protein belongs to the ribose 5-phosphate isomerase family. In terms of assembly, homodimer.

It catalyses the reaction aldehydo-D-ribose 5-phosphate = D-ribulose 5-phosphate. The protein operates within carbohydrate degradation; pentose phosphate pathway; D-ribose 5-phosphate from D-ribulose 5-phosphate (non-oxidative stage): step 1/1. Functionally, catalyzes the reversible conversion of ribose-5-phosphate to ribulose 5-phosphate. The polypeptide is Ribose-5-phosphate isomerase A (Gloeothece citriformis (strain PCC 7424) (Cyanothece sp. (strain PCC 7424))).